The sequence spans 567 residues: MAKYVIGSAWPYVQTVPHLGNLIGSVLSADVYARYLRFRGHDVVFVSGSDMHGTPIEVEAIQLGVDPEEYAKKMHQIVAELFKRWDISFDLYTHTHSDTHIKFVQNFFLKIYNNGYIFTKEEEVPYCPRDKIYLPDRFIIGKCPYCGYERARGDQCENCGRLLDPKQLIEPRCAICGSRPEWRITKHWYLDLRKLEDRIRKYVEENPHLPPNAKEMSLGMLKEGLKPRAITRDNKWGIPAPFPGAEGKTIYVWFEAVLGYISAVVELFREDAGKWERYWKDPETKIVFFVGKDNIPFHVIILPALLLANGEGYTLPTTTASTEYLLYEGDKFSKSRRWGIWIDEALQLMPPDYWRFILIYIRPENRDTSFTWALALEIINKIMNDDVGNYINRVLTFIKNRMGGVVPPPGAPTREDEEFINRVIQLFKKAEKHYDAIELKDALHTVVEIAREGNRYLNARAPWELLRRDIEVANAVMYRAYWSLKTIAAGLTPVTPRSAAELWKMLGISQPSWDEAYKPPTPGTPLGDVRPLFRKFTEEEVKDMLKKLEELRSQRASKKYPWEQVLL.

Residues 11 to 21 (PYVQTVPHLGN) carry the 'HIGH' region motif. Positions 143, 146, 156, and 159 each coordinate Zn(2+). The 'KMSKS' region motif lies at 331–335 (KFSKS). K334 serves as a coordination point for ATP.

This sequence belongs to the class-I aminoacyl-tRNA synthetase family. MetG type 1 subfamily. It depends on Zn(2+) as a cofactor.

Its subcellular location is the cytoplasm. It catalyses the reaction tRNA(Met) + L-methionine + ATP = L-methionyl-tRNA(Met) + AMP + diphosphate. In terms of biological role, is required not only for elongation of protein synthesis but also for the initiation of all mRNA translation through initiator tRNA(fMet) aminoacylation. This Pyrobaculum islandicum (strain DSM 4184 / JCM 9189 / GEO3) protein is Methionine--tRNA ligase.